A 593-amino-acid polypeptide reads, in one-letter code: Alanine--tRNA ligase (593 aa).

Residues His-456, His-460, Cys-558, and His-562 each coordinate Zn(2+).

It belongs to the class-II aminoacyl-tRNA synthetase family. Zn(2+) serves as cofactor.

It is found in the cytoplasm. It carries out the reaction tRNA(Ala) + L-alanine + ATP = L-alanyl-tRNA(Ala) + AMP + diphosphate. Catalyzes the attachment of alanine to tRNA(Ala) in a two-step reaction: alanine is first activated by ATP to form Ala-AMP and then transferred to the acceptor end of tRNA(Ala). Also edits incorrectly charged Ser-tRNA(Ala) and Gly-tRNA(Ala) via its editing domain. In Borrelia hermsii (strain HS1 / DAH), this protein is Alanine--tRNA ligase (alaS).